Here is a 1064-residue protein sequence, read N- to C-terminus: WD repeat-containing protein on Y chromosome (1064 aa).

8 WD repeats span residues 150 to 194 (EEVT…IRTA), 317 to 356 (RIPLGVSTFFVAESHNIVVTGGPDTFVRIWDVYIPTEPSA), 360 to 399 (GHNGGIVLVFVQPEENKVYSVDYQKIIKVWDLQEHTLLQT), 450 to 489 (THAAPVSVVLYNRLFRNIVTCGLDSYIIVWDPWTGRRKII), 502 to 541 (IIDIEITAACFDPLEQFLLTGARDGSLKIWNYNNAVVVRN), 589 to 629 (FHTD…RRYS), 742 to 781 (KTGDCVLTMCTDRKNRFLYTGTAFGYVKIWYIVNFCVPAS), and 825 to 864 (GHLKAINSIAFINLPKIVFTGSHDYSCRLWTQGGRYLGTL). The segment at 1022 to 1044 (SSLNIKQPTRRRSGKTHDPRNIR) is disordered.

This Drosophila ananassae (Fruit fly) protein is WD repeat-containing protein on Y chromosome.